The following is an 80-amino-acid chain: MTTLGMTMLVLLLLLPLATCLGDGERSPWDSLLRALRSDPQACEPTISGGEMICRDEVCASTGCNCGYNIAKAHCYCACP.

Residues 1-20 form the signal peptide; sequence MTTLGMTMLVLLLLLPLATC. A propeptide spanning residues 21–36 is cleaved from the precursor; sequence LGDGERSPWDSLLRAL.

Post-translationally, contains 4 disulfide bonds. In terms of tissue distribution, expressed by the venom duct.

The protein localises to the secreted. The sequence is that of Conotoxin Cl10.1 from Californiconus californicus (California cone).